We begin with the raw amino-acid sequence, 938 residues long: Isoleucine--tRNA ligase (938 aa).

The 'HIGH' region motif lies at 58–68 (PYANGNIHIGH). Glu561 serves as a coordination point for L-isoleucyl-5'-AMP. Positions 602–606 (KMSKS) match the 'KMSKS' region motif. An ATP-binding site is contributed by Lys605. 4 residues coordinate Zn(2+): Cys901, Cys904, Cys921, and Cys924.

The protein belongs to the class-I aminoacyl-tRNA synthetase family. IleS type 1 subfamily. As to quaternary structure, monomer. It depends on Zn(2+) as a cofactor.

It is found in the cytoplasm. It catalyses the reaction tRNA(Ile) + L-isoleucine + ATP = L-isoleucyl-tRNA(Ile) + AMP + diphosphate. Its function is as follows. Catalyzes the attachment of isoleucine to tRNA(Ile). As IleRS can inadvertently accommodate and process structurally similar amino acids such as valine, to avoid such errors it has two additional distinct tRNA(Ile)-dependent editing activities. One activity is designated as 'pretransfer' editing and involves the hydrolysis of activated Val-AMP. The other activity is designated 'posttransfer' editing and involves deacylation of mischarged Val-tRNA(Ile). The protein is Isoleucine--tRNA ligase of Yersinia enterocolitica serotype O:8 / biotype 1B (strain NCTC 13174 / 8081).